Here is a 179-residue protein sequence, read N- to C-terminus: ATP synthase subunit delta (179 aa).

This sequence belongs to the ATPase delta chain family. In terms of assembly, F-type ATPases have 2 components, F(1) - the catalytic core - and F(0) - the membrane proton channel. F(1) has five subunits: alpha(3), beta(3), gamma(1), delta(1), epsilon(1). F(0) has three main subunits: a(1), b(2) and c(10-14). The alpha and beta chains form an alternating ring which encloses part of the gamma chain. F(1) is attached to F(0) by a central stalk formed by the gamma and epsilon chains, while a peripheral stalk is formed by the delta and b chains.

It is found in the cell inner membrane. In terms of biological role, f(1)F(0) ATP synthase produces ATP from ADP in the presence of a proton or sodium gradient. F-type ATPases consist of two structural domains, F(1) containing the extramembraneous catalytic core and F(0) containing the membrane proton channel, linked together by a central stalk and a peripheral stalk. During catalysis, ATP synthesis in the catalytic domain of F(1) is coupled via a rotary mechanism of the central stalk subunits to proton translocation. This protein is part of the stalk that links CF(0) to CF(1). It either transmits conformational changes from CF(0) to CF(1) or is implicated in proton conduction. The polypeptide is ATP synthase subunit delta (Maricaulis maris (strain MCS10) (Caulobacter maris)).